Consider the following 474-residue polypeptide: Putative matrix metalloproteinase (474 aa).

The first 17 residues, 1-17 (MIIYFAVITCSLKLCRS), serve as a signal peptide directing secretion. H189 is a binding site for Zn(2+). E190 is an active-site residue. Residues H193 and H199 each coordinate Zn(2+). The stretch at 299 to 344 (AGVYDAISYVRGDLYVFVGDLHWRFDTSGMLHNGYPQPTGATWRLP) is one Hemopexin repeat.

It belongs to the peptidase M10A family. It depends on Zn(2+) as a cofactor.

This chain is Putative matrix metalloproteinase, found in Heliothis virescens ascovirus 3e (HvAV-3e).